The chain runs to 244 residues: Salivary gland SP38-40.A protein (244 aa).

Residues 1–21 (MRIKFLVVLAVICLFAHYASA) form the signal peptide. 3 disordered regions span residues 23-91 (GMGG…EKKQ), 137-169 (PPPG…LRKE), and 206-244 (VQGK…DAKK). Composition is skewed to basic and acidic residues over residues 26–86 (GDKK…EVKK) and 157–169 (PPKE…LRKE). Tandem repeats lie at residues 29–34 (KPKDAP) and 35–40 (KPKDAP). The segment at 29–47 (KPKDAPKPKDAPKPKEVKP) is 3 X 6 AA approximate tandem repeats of K-P-K-D-A-P. One copy of the 1-3; approximate repeat lies at 41-47 (KPKEVKP). Repeat copies occupy residues 156 to 159 (KPPK) and 161 to 164 (KPPK). Positions 156 to 168 (KPPKEKPPKKLRK) are 3 X 4 AA approximate tandem repeats of K-P-P-K. Residues 165–168 (KLRK) form a 2-3; approximate repeat. Residues 209–224 (KQKKGAKKAKGGKKAA) show a composition bias toward basic residues. A run of 3 repeats spans residues 225–228 (PKPG), 229–232 (PKPG), and 233–236 (PKQA). A 4 X 4 AA approximate tandem repeats of P-K-[PQ]-[GA] region spans residues 225-240 (PKPGPKPGPKQADKPK). A compositionally biased stretch (basic and acidic residues) spans 235–244 (QADKPKDAKK). A 3-4; approximate repeat occupies 237 to 240 (DKPK).

As to expression, salivary gland.

The protein resides in the secreted. Used by the larvae to construct a supramolecular structure, the larval tube. The protein is Salivary gland SP38-40.A protein (SP38-40.A) of Chironomus tentans (Midge).